Here is a 118-residue protein sequence, read N- to C-terminus: Holo-[acyl-carrier-protein] synthase (118 aa).

Mg(2+) is bound by residues Asp8 and Glu58.

This sequence belongs to the P-Pant transferase superfamily. AcpS family. The cofactor is Mg(2+).

The protein resides in the cytoplasm. It catalyses the reaction apo-[ACP] + CoA = holo-[ACP] + adenosine 3',5'-bisphosphate + H(+). Functionally, transfers the 4'-phosphopantetheine moiety from coenzyme A to a Ser of acyl-carrier-protein. The protein is Holo-[acyl-carrier-protein] synthase of Streptococcus pyogenes serotype M5 (strain Manfredo).